A 339-amino-acid chain; its full sequence is Biotin synthase (339 aa).

The 228-residue stretch at 55 to 282 (NAVQLSTLLS…KAVVRLSAGR (228 aa)) folds into the Radical SAM core domain. Positions 70, 74, and 77 each coordinate [4Fe-4S] cluster. Residues Cys114, Cys145, Cys205, and Arg277 each contribute to the [2Fe-2S] cluster site.

The protein belongs to the radical SAM superfamily. Biotin synthase family. In terms of assembly, homodimer. Requires [4Fe-4S] cluster as cofactor. It depends on [2Fe-2S] cluster as a cofactor.

The enzyme catalyses (4R,5S)-dethiobiotin + (sulfur carrier)-SH + 2 reduced [2Fe-2S]-[ferredoxin] + 2 S-adenosyl-L-methionine = (sulfur carrier)-H + biotin + 2 5'-deoxyadenosine + 2 L-methionine + 2 oxidized [2Fe-2S]-[ferredoxin]. Its pathway is cofactor biosynthesis; biotin biosynthesis; biotin from 7,8-diaminononanoate: step 2/2. Catalyzes the conversion of dethiobiotin (DTB) to biotin by the insertion of a sulfur atom into dethiobiotin via a radical-based mechanism. The polypeptide is Biotin synthase (Burkholderia cenocepacia (strain ATCC BAA-245 / DSM 16553 / LMG 16656 / NCTC 13227 / J2315 / CF5610) (Burkholderia cepacia (strain J2315))).